A 230-amino-acid polypeptide reads, in one-letter code: Urease accessory protein UreE (230 aa).

The span at 200-210 (HAIHSHGTGHT) shows a compositional bias: basic residues. The disordered stretch occupies residues 200-230 (HAIHSHGTGHTHSHDHDHSHSHGDHDHDHKH). Residues 211–230 (HSHDHDHSHSHGDHDHDHKH) are compositionally biased toward basic and acidic residues.

It belongs to the UreE family.

It localises to the cytoplasm. Functionally, involved in urease metallocenter assembly. Binds nickel. Probably functions as a nickel donor during metallocenter assembly. The sequence is that of Urease accessory protein UreE from Yersinia enterocolitica serotype O:8 / biotype 1B (strain NCTC 13174 / 8081).